Here is a 486-residue protein sequence, read N- to C-terminus: Cephamycin export protein CmcT (486 aa).

Transmembrane regions (helical) follow at residues 24–44, 56–76, 88–108, 121–141, 153–173, 178–198, 210–230, 241–261, 284–304, 317–337, 345–365, 369–389, 418–438, and 450–470; these read VLAC…TVAL, ASLQ…LLFG, VFLG…LATS, AGAA…FAEG, AVAL…TEFL, VLLV…RVLA, LDLP…LGVS, AVAV…VVEA, LAML…TLSM, LGFV…VPWL, VLIA…SLLT, AYLG…GLVG, FGGA…TSGS, and FVGI…LPAL.

The protein belongs to the major facilitator superfamily.

It is found in the cell membrane. Involved in cephamycin export. In Amycolatopsis lactamdurans (Nocardia lactamdurans), this protein is Cephamycin export protein CmcT (cmcT).